The primary structure comprises 503 residues: Aspartyl/glutamyl-tRNA(Asn/Gln) amidotransferase subunit B (503 aa).

The protein belongs to the GatB/GatE family. GatB subfamily. In terms of assembly, heterotrimer of A, B and C subunits.

The enzyme catalyses L-glutamyl-tRNA(Gln) + L-glutamine + ATP + H2O = L-glutaminyl-tRNA(Gln) + L-glutamate + ADP + phosphate + H(+). It catalyses the reaction L-aspartyl-tRNA(Asn) + L-glutamine + ATP + H2O = L-asparaginyl-tRNA(Asn) + L-glutamate + ADP + phosphate + 2 H(+). Allows the formation of correctly charged Asn-tRNA(Asn) or Gln-tRNA(Gln) through the transamidation of misacylated Asp-tRNA(Asn) or Glu-tRNA(Gln) in organisms which lack either or both of asparaginyl-tRNA or glutaminyl-tRNA synthetases. The reaction takes place in the presence of glutamine and ATP through an activated phospho-Asp-tRNA(Asn) or phospho-Glu-tRNA(Gln). This chain is Aspartyl/glutamyl-tRNA(Asn/Gln) amidotransferase subunit B, found in Mycolicibacterium smegmatis (strain ATCC 700084 / mc(2)155) (Mycobacterium smegmatis).